Here is a 387-residue protein sequence, read N- to C-terminus: tRNA-specific 2-thiouridylase MnmA (387 aa).

ATP is bound by residues 6 to 13 (AMSGGVDS) and Leu32. The Nucleophile role is filled by Cys101. A disulfide bridge links Cys101 with Cys199. Gly125 contacts ATP. The interval 148-150 (KDQ) is interaction with tRNA. The active-site Cysteine persulfide intermediate is Cys199.

It belongs to the MnmA/TRMU family.

It is found in the cytoplasm. The catalysed reaction is S-sulfanyl-L-cysteinyl-[protein] + uridine(34) in tRNA + AH2 + ATP = 2-thiouridine(34) in tRNA + L-cysteinyl-[protein] + A + AMP + diphosphate + H(+). Catalyzes the 2-thiolation of uridine at the wobble position (U34) of tRNA, leading to the formation of s(2)U34. This Clavibacter michiganensis subsp. michiganensis (strain NCPPB 382) protein is tRNA-specific 2-thiouridylase MnmA.